Reading from the N-terminus, the 150-residue chain is Small ribosomal subunit protein uS13 (150 aa).

The interval 131–150 is disordered; sequence QRTKSTFRRGPTVGVSRRKK.

The protein belongs to the universal ribosomal protein uS13 family. Part of the 30S ribosomal subunit. Forms a loose heterodimer with protein S19. Forms two bridges to the 50S subunit in the 70S ribosome.

Its function is as follows. Located at the top of the head of the 30S subunit, it contacts several helices of the 16S rRNA. In the 70S ribosome it contacts the 23S rRNA (bridge B1a) and protein L5 of the 50S subunit (bridge B1b), connecting the 2 subunits; these bridges are implicated in subunit movement. The protein is Small ribosomal subunit protein uS13 of Methanocaldococcus jannaschii (strain ATCC 43067 / DSM 2661 / JAL-1 / JCM 10045 / NBRC 100440) (Methanococcus jannaschii).